The primary structure comprises 331 residues: Probable transaldolase (331 aa).

Lys142 functions as the Schiff-base intermediate with substrate in the catalytic mechanism.

Belongs to the transaldolase family. Type 1 subfamily. Homodimer.

Its subcellular location is the cytoplasm. It catalyses the reaction D-sedoheptulose 7-phosphate + D-glyceraldehyde 3-phosphate = D-erythrose 4-phosphate + beta-D-fructose 6-phosphate. It participates in carbohydrate degradation; pentose phosphate pathway; D-glyceraldehyde 3-phosphate and beta-D-fructose 6-phosphate from D-ribose 5-phosphate and D-xylulose 5-phosphate (non-oxidative stage): step 2/3. In terms of biological role, transaldolase is important for the balance of metabolites in the pentose-phosphate pathway. The chain is Probable transaldolase from Drosophila melanogaster (Fruit fly).